A 304-amino-acid chain; its full sequence is Protease HtpX homolog (304 aa).

2 consecutive transmembrane segments (helical) span residues 14–34 and 39–59; these read IFII…IGII and YLNG…IMVM. H144 is a Zn(2+) binding site. Residue E145 is part of the active site. A Zn(2+)-binding site is contributed by H148. 2 consecutive transmembrane segments (helical) span residues 159 to 179 and 202 to 222; these read IAIA…RMIF and AIIY…ATAI. E231 lines the Zn(2+) pocket.

It belongs to the peptidase M48B family. Zn(2+) serves as cofactor.

It localises to the cell membrane. The protein is Protease HtpX homolog of Listeria monocytogenes serovar 1/2a (strain ATCC BAA-679 / EGD-e).